We begin with the raw amino-acid sequence, 119 residues long: Integration host factor subunit alpha (119 aa).

The interval 96 to 119 (INGQQGSGKMNGEASHEQLSAEPE) is disordered.

Belongs to the bacterial histone-like protein family. In terms of assembly, heterodimer of an alpha and a beta chain.

Functionally, this protein is one of the two subunits of integration host factor, a specific DNA-binding protein that functions in genetic recombination as well as in transcriptional and translational control. The chain is Integration host factor subunit alpha from Bradyrhizobium sp. (strain BTAi1 / ATCC BAA-1182).